The primary structure comprises 238 residues: tRNA (guanine-N(7)-)-methyltransferase (238 aa).

A compositionally biased stretch (polar residues) spans 1 to 12 (MTDTAENQTPND). Positions 1 to 20 (MTDTAENQTPNDRQAGHPRS) are disordered. 4 residues coordinate S-adenosyl-L-methionine: glutamate 70, aspartate 95, aspartate 122, and aspartate 145. The active site involves aspartate 145. Substrate-binding positions include lysine 149, aspartate 181, and 216–219 (TKFE).

The protein belongs to the class I-like SAM-binding methyltransferase superfamily. TrmB family.

The catalysed reaction is guanosine(46) in tRNA + S-adenosyl-L-methionine = N(7)-methylguanosine(46) in tRNA + S-adenosyl-L-homocysteine. It functions in the pathway tRNA modification; N(7)-methylguanine-tRNA biosynthesis. Functionally, catalyzes the formation of N(7)-methylguanine at position 46 (m7G46) in tRNA. The sequence is that of tRNA (guanine-N(7)-)-methyltransferase from Neisseria gonorrhoeae (strain NCCP11945).